Here is a 261-residue protein sequence, read N- to C-terminus: Type III pantothenate kinase (261 aa).

6–13 (DVGNTNAK) contributes to the ATP binding site. 108–111 (GADR) contributes to the substrate binding site. The active-site Proton acceptor is Asp110. Thr134 serves as a coordination point for ATP. Thr188 provides a ligand contact to substrate.

It belongs to the type III pantothenate kinase family. In terms of assembly, homodimer. NH4(+) serves as cofactor. Requires K(+) as cofactor.

It is found in the cytoplasm. The catalysed reaction is (R)-pantothenate + ATP = (R)-4'-phosphopantothenate + ADP + H(+). Its pathway is cofactor biosynthesis; coenzyme A biosynthesis; CoA from (R)-pantothenate: step 1/5. Functionally, catalyzes the phosphorylation of pantothenate (Pan), the first step in CoA biosynthesis. This chain is Type III pantothenate kinase, found in Sphingopyxis alaskensis (strain DSM 13593 / LMG 18877 / RB2256) (Sphingomonas alaskensis).